A 396-amino-acid chain; its full sequence is Cathepsin D (396 aa).

Positions 1–18 are cleaved as a signal peptide; it reads MKFLYLFLFAVFAWTSDA. The propeptide at 19–61 is activation peptide; that stretch reads IVRIPLKKFRSIRRTLSDSGLNVEQLLAGTNSLQHNQGFPSSN. Positions 76–393 constitute a Peptidase A1 domain; it reads YYGEIGLGTP…DRESNRVGFA (318 aa). Asp-94 is an active-site residue. A disulfide bridge connects residues Cys-107 and Cys-114. N-linked (GlcNAc...) asparagine glycosylation is present at Asn-131. Cys-272 and Cys-276 are disulfide-bonded. Asp-281 is an active-site residue. A disulfide bridge links Cys-315 with Cys-352.

This sequence belongs to the peptidase A1 family. In terms of assembly, monomer.

The protein localises to the lysosome. It carries out the reaction Specificity similar to, but narrower than, that of pepsin A. Does not cleave the 4-Gln-|-His-5 bond in B chain of insulin.. With respect to regulation, inhibited by pepstatin. In terms of biological role, acid protease active in intracellular protein breakdown. This Clupea harengus (Atlantic herring) protein is Cathepsin D (ctsd).